Reading from the N-terminus, the 93-residue chain is Large ribosomal subunit protein uL23 (93 aa).

The protein belongs to the universal ribosomal protein uL23 family. As to quaternary structure, part of the 50S ribosomal subunit. Contacts protein L29, and trigger factor when it is bound to the ribosome.

In terms of biological role, one of the early assembly proteins it binds 23S rRNA. One of the proteins that surrounds the polypeptide exit tunnel on the outside of the ribosome. Forms the main docking site for trigger factor binding to the ribosome. The sequence is that of Large ribosomal subunit protein uL23 from Nitratiruptor sp. (strain SB155-2).